The chain runs to 351 residues: Alternative oxidase, mitochondrial (351 aa).

A helical transmembrane segment spans residues 147-167 (LTRFIFLESVAGVPGMVGGML). Residues Glu-154, Glu-193, and His-196 each coordinate Fe cation. Residues 212-232 (LMVLGAQGVFFNGFFLSYLMS) traverse the membrane as a helical segment. Positions 244, 245, 299, and 302 each coordinate Fe cation. Residues 322 to 351 (AAKYKDPTKAHPNKGIADLKPTGWEREEVI) form a disordered region.

This sequence belongs to the alternative oxidase family. Requires Fe cation as cofactor.

It localises to the mitochondrion inner membrane. Its function is as follows. Catalyzes cyanide-resistant oxygen consumption. May increase respiration when the cytochrome respiratory pathway is restricted, or in response to low temperatures. In Aspergillus niger, this protein is Alternative oxidase, mitochondrial (aox1).